A 642-amino-acid chain; its full sequence is Pentatricopeptide repeat-containing protein At3g16010 (642 aa).

14 PPR repeats span residues 125-159 (DCSTYMTLIRCLEEARLYGEMYRTIQEVVRNTYVS), 161-195 (SPAVLSELVKALGRAKMVSKALSVFYQAKGRKCKP), 196-230 (TSSTYNSVILMLMQEGQHEKVHEVYTEMCNEGDCF), 232-266 (DTITYSALISSYEKLGRNDSAIRLFDEMKDNCMQP), 267-301 (TEKIYTTLLGIYFKVGKVEKALDLFEEMKRAGCSP), 302-336 (TVYTYTELIKGLGKAGRVDEAYGFYKDMLRDGLTP), 337-371 (DVVFLNNLMNILGKVGRVEELTNVFSEMGMWRCTP), 372-407 (TVVSYNTVIKALFESKAHVSEVSSWFDKMKADSVSP), 408-442 (SEFTYSILIDGYCKTNRVEKALLLLEEMDEKGFPP), 443-473 (CPAAYCSLINALGKAKRYEAANELFKELKEN), 478-512 (SSRVYAVMIKHFGKCGKLSEAVDLFNEMKNQGSGP), 513-547 (DVYAYNALMSGMVKAGMINEANSLLRKMEENGCRA), 548-582 (DINSHNIILNGFARTGVPRRAIEMFETIKHSGIKP), and 583-617 (DGVTYNTLLGCFAHAGMFEEAARMMREMKDKGFEY).

The protein belongs to the PPR family. P subfamily.

This is Pentatricopeptide repeat-containing protein At3g16010 from Arabidopsis thaliana (Mouse-ear cress).